The following is an 825-amino-acid chain: Breast cancer anti-estrogen resistance protein 3 homolog (825 aa).

Ala-2 carries the post-translational modification N-acetylalanine. Residues Ser-32, Ser-78, Ser-83, Ser-182, and Ser-290 each carry the phosphoserine modification. The tract at residues 40–84 (EAYPDVSIHGTLPRKKKGPPPIRSCDSASHMGTLPHSKSPRQSSP) is disordered. Residues 154–253 (WYHGRIPRQV…QSGAIIFQPI (100 aa)) enclose the SH2 domain. The segment at 300–320 (DHSLPRGNLLRNKDKSGSQPA) is disordered. An N6-methyllysine modification is found at Lys-334. Phosphoserine is present on residues Ser-358, Ser-363, and Ser-375. An Omega-N-methylarginine modification is found at Arg-442. The residue at position 471 (Ser-471) is a Phosphoserine. The 271-residue stretch at 548-818 (DARVIAQHML…TALSRKLEPP (271 aa)) folds into the Ras-GEF domain. Residues 744–748 (LATAR) form a mediates the interaction with BCAR1/p130CAS region.

Part of a complex comprised of PTPRA, BCAR1, BCAR3 and SRC; the formation of the complex is dependent on integrin mediated-tyrosine phosphorylation of PTPRA. Within the complex, interacts (via SH2 domain) with PTPRA (when phosphorylated on 'Tyr-792'). Interacts (via Ras-GEF domain) with BCAR1. Interacts (via Ras-GEF domain) with NEDD9. Interacts with PTK2/FAK1. Interacts with PTPN1. Interacts (via SH2 domain) with EGFR (when tyrosine-phosphorylated). In terms of processing, phosphorylated on tyrosine residues.

It is found in the cytoplasm. The protein resides in the cell junction. Its subcellular location is the focal adhesion. In terms of biological role, acts as an adapter protein downstream of several growth factor receptors to promote cell proliferation, migration, and redistribution of actin fibers. Specifically involved in INS/insulin signaling pathway by mediating MAPK1/ERK2-MAPK3/ERK1 activation and DNA synthesis. Promotes insulin-mediated membrane ruffling. In response to vasoconstrictor peptide EDN1, involved in the activation of RAP1 downstream of PTK2B via interaction with phosphorylated BCAR1. Inhibits cell migration and invasion via regulation of TGFB-mediated matrix digestion, actin filament rearrangement, and inhibition of invadopodia activity. May inhibit TGFB/SMAD signaling, via facilitating BCAR1 and SMAD2 and/or SMAD3 interaction. Regulates EGF-induced DNA synthesis. Required for the maintenance of ocular lens morphology and structural integrity, potentially via regulation of focal adhesion complex signaling. Acts upstream of PTPRA to regulate the localization of BCAR1 and PTPRA to focal adhesions, via regulation of SRC-mediated phosphorylation of PTPRA. Positively regulates integrin-induced tyrosine phosphorylation of BCAR1. Acts as a guanine nucleotide exchange factor (GEF) for small GTPases RALA, RAP1A and RRAS. However, in a contrasting study, lacks GEF activity towards RAP1. In Rattus norvegicus (Rat), this protein is Breast cancer anti-estrogen resistance protein 3 homolog.